The primary structure comprises 528 residues: MAGSDTAPFLSQADDPDDGPVPGTPGLPGSTGNPKSEEPEVPDQEGLQRITGLSPGRSALIVAVLCYINLLNYMDRFTVAGVLPDIEQFFNIGDSSSGLIQTVFISSYMVLAPVFGYLGDRYNRKYLMCGGIAFWSLVTLGSSFIPGEHFWLLLLTRGLVGVGEASYSTIAPTLIADLFVADQRSRMLSIFYFAIPVGSGLGYIAGSKVKDMAGDWHWALRVTPGLGVVAVLLLFLVVREPPRGAVERHSDLPPLNPTSWWADLRALARNPSFVLSSLGFTAVAFVTGSLALWAPAFLLRSRVVLGETPPCLPGDSCSSSDSLIFGLITCLTGVLGVGLGVEISRRLRHSNPRADPLVCATGLLGSAPFLFLSLACARGSIVATYIFIFIGETLLSMNWAIVADILLYVVIPTRRSTAEAFQIVLSHLLGDAGSPYLIGLISDRLRRNWPPSFLSEFRALQFSLMLCAFVGALGGAAFLGTAIFIEADRRRAQLHVQGLLHEAGSTDDRIVVPQRGRSTRVPVASVLI.

The interval 1–49 (MAGSDTAPFLSQADDPDDGPVPGTPGLPGSTGNPKSEEPEVPDQEGLQR) is disordered. Alanine 2 bears the N-acetylalanine mark. 12 consecutive transmembrane segments (helical) span residues 50-70 (ITGL…YINL), 98-118 (GLIQ…FGYL), 127-147 (LMCG…FIPG), 160-180 (VGVG…DLFV), 187-207 (MLSI…IAGS), 218-238 (WALR…FLVV), 278-298 (LGFT…PAFL), 323-343 (LIFG…GVEI), 357-377 (LVCA…LACA), 381-401 (IVAT…NWAI), 421-441 (FQIV…IGLI), and 465-485 (MLCA…AIFI). A Phosphoserine modification is found at serine 518.

Belongs to the major facilitator superfamily. Spinster (TC 2.A.1.49) family. As to quaternary structure, interacts with BCL2 and BCL2L1.

It is found in the lysosome membrane. It localises to the mitochondrion inner membrane. The catalysed reaction is a 1-acyl-sn-glycero-3-phosphocholine(out) + H(+)(out) = a 1-acyl-sn-glycero-3-phosphocholine(in) + H(+)(in). It catalyses the reaction 1-hexadecanoyl-sn-glycero-3-phosphocholine(out) + H(+)(out) = 1-hexadecanoyl-sn-glycero-3-phosphocholine(in) + H(+)(in). The enzyme catalyses 1-(9Z-octadecenoyl)-sn-glycero-3-phosphocholine(out) + H(+)(out) = 1-(9Z-octadecenoyl)-sn-glycero-3-phosphocholine(in) + H(+)(in). It carries out the reaction 1-(5Z,8Z,11Z,14Z-eicosatetraenoyl)-sn-glycero-3-phosphocholine(out) + H(+)(out) = 1-(5Z,8Z,11Z,14Z-eicosatetraenoyl)-sn-glycero-3-phosphocholine(in) + H(+)(in). The catalysed reaction is 1-(4Z,7Z,10Z,13Z,16Z,19Z-docosahexaenoyl)-sn-glycero-3-phosphocholine(out) + H(+)(out) = 1-(4Z,7Z,10Z,13Z,16Z,19Z-docosahexaenoyl)-sn-glycero-3-phosphocholine(in) + H(+)(in). It catalyses the reaction a 1-acyl-sn-glycero-3-phosphoethanolamine(out) + H(+)(out) = a 1-acyl-sn-glycero-3-phosphoethanolamine(in) + H(+)(in). The enzyme catalyses 1-(9Z-octadecenoyl)-sn-glycero-3-phosphoethanolamine(out) + H(+)(out) = 1-(9Z-octadecenoyl)-sn-glycero-3-phosphoethanolamine(in) + H(+)(in). It carries out the reaction 1-acyl-sn-glycero-3-phospho-(1'-sn-glycerol)(out) + H(+)(out) = 1-acyl-sn-glycero-3-phospho-(1'-sn-glycerol)(in) + H(+)(in). The catalysed reaction is 1-(9Z-octadecenoyl)-sn-glycero-3-phospho-(1'-sn-glycerol)(out) + H(+)(out) = 1-(9Z-octadecenoyl)-sn-glycero-3-phospho-(1'-sn-glycerol)(in) + H(+)(in). It catalyses the reaction a 1-O-(1Z-alkenyl)-sn-glycero-3-phosphocholine(out) + H(+)(out) = a 1-O-(1Z-alkenyl)-sn-glycero-3-phosphocholine(in) + H(+)(in). The enzyme catalyses 1-(1Z-hexadecenyl)-sn-glycero-3-phosphocholine(out) + H(+)(out) = 1-(1Z-hexadecenyl)-sn-glycero-3-phosphocholine(in) + H(+)(in). It carries out the reaction a 1-O-(1Z-alkenyl)-sn-glycero-3-phosphoethanolamine(out) + H(+)(out) = a 1-O-(1Z-alkenyl)-sn-glycero-3-phosphoethanolamine(in) + H(+)(in). The catalysed reaction is 1-O-(1Z-hexadecenyl)-sn-glycero-3-phosphoethanolamine(out) + H(+)(out) = 1-O-(1Z-hexadecenyl)-sn-glycero-3-phosphoethanolamine(in) + H(+)(in). Its function is as follows. Plays a critical role in the phospholipid salvage pathway from lysosomes to the cytosol. Mediates the rate-limiting, proton-dependent, lysosomal efflux of lysophospholipids, which can then be reacylated by acyltransferases in the endoplasmic reticulum to form phospholipids. Selective for zwitterionic headgroups such as lysophosphatidylcholine (LPC) and lysophosphatidylethanolamine (LPE), can also transport lysophosphatidylglycerol (LPG), but not other anionic lysophospholipids, sphingosine, nor sphingomyelin. Transports lysophospholipids with saturated, monounsaturated, and polyunsaturated fatty acids, such as 1-hexadecanoyl-sn-glycero-3-phosphocholine, 1-(9Z-octadecenoyl)-sn-glycero-3-phosphocholine and 1-(4Z,7Z,10Z,13Z,16Z,19Z-docosahexaenoyl)-sn-glycero-3-phosphocholine, respectively. Can also transport lysoplasmalogen (LPC with a fatty alcohol) such as 1-(1Z-hexadecenyl)-sn-glycero-3-phosphocholine. Lysosomal LPC could function as intracellular signaling messenger. Essential player in lysosomal homeostasis. Crucial for cell survival under conditions of nutrient limitation. May be involved in necrotic or autophagic cell death. This chain is Protein spinster homolog 1 (SPNS1), found in Homo sapiens (Human).